Consider the following 224-residue polypeptide: Zinc finger C4H2 domain-containing protein (224 aa).

Positions 12-97 (ENIKEIRNKT…NKLLESTRRL (86 aa)) form a coiled coil. Disordered stretches follow at residues 166–185 (QAARKQDARQTATFRQQPPP) and 204–224 (PLCKAKSRSRNPKKPKRKPDE). The C4H2-type zinc finger occupies 189–206 (CLSCHQQIHRNAPICPLC). The span at 208–224 (AKSRSRNPKKPKRKPDE) shows a compositional bias: basic residues.

The protein resides in the nucleus. It is found in the cytoplasm. Its subcellular location is the postsynaptic cell membrane. Plays a role in GABAergic and V2 interneurons differentiation. Involved in motoneuron development and in neuromuscular junction formation. This Danio rerio (Zebrafish) protein is Zinc finger C4H2 domain-containing protein (zc4h2).